Here is a 323-residue protein sequence, read N- to C-terminus: L-lactate dehydrogenase 1 (323 aa).

NAD(+) is bound by residues valine 18, aspartate 39, tyrosine 69, and glycine 83 to alanine 84. The substrate site is built by glutamine 86 and arginine 92. NAD(+)-binding positions include serine 105, valine 122–asparagine 124, and serine 147. Position 124 to 127 (asparagine 124 to aspartate 127) interacts with substrate. Aspartate 152–arginine 155 is a binding site for substrate. Histidine 179 (proton acceptor) is an active-site residue. A Phosphotyrosine modification is found at tyrosine 223. Threonine 232 provides a ligand contact to substrate.

It belongs to the LDH/MDH superfamily. LDH family. In terms of assembly, homotetramer.

It is found in the cytoplasm. The enzyme catalyses (S)-lactate + NAD(+) = pyruvate + NADH + H(+). It functions in the pathway fermentation; pyruvate fermentation to lactate; (S)-lactate from pyruvate: step 1/1. In terms of biological role, catalyzes the conversion of lactate to pyruvate. In Lactobacillus acidophilus (strain ATCC 700396 / NCK56 / N2 / NCFM), this protein is L-lactate dehydrogenase 1.